The following is a 790-amino-acid chain: Sorting nexin mvp1 (790 aa).

2 stretches are compositionally biased toward polar residues: residues 1 to 10 (MSLFGSSPPN) and 20 to 40 (KTAN…TRSG). Disordered regions lie at residues 1-62 (MSLF…RKQR), 215-342 (PNLS…SIHN), and 373-406 (AITG…HVRS). Over residues 225–240 (PQRPVTPPKAPTPSPP) the composition is skewed to pro residues. The segment covering 241–252 (KQQQQQQHQPPT) has biased composition (low complexity). Positions 269–283 (DLHKGHNHGPLEHST) are enriched in basic and acidic residues. The span at 297 to 319 (NDLNGNDAVSYSTSPEVTTTSSA) shows a compositional bias: polar residues. Low complexity-rich tracts occupy residues 324–339 (TTST…GPSS) and 386–400 (QSVS…PNRS). A PX domain is found at 411–525 (EENILVTLMP…IMFLTVPTEL (115 aa)). A 1,2-diacyl-sn-glycero-3-phospho-(1D-myo-inositol-3-phosphate) is bound by residues R447, S449, K473, and R492.

The protein belongs to the sorting nexin family.

The protein localises to the cytoplasm. Its subcellular location is the membrane. Its function is as follows. Required for vacuolar protein sorting. In Neurospora crassa (strain ATCC 24698 / 74-OR23-1A / CBS 708.71 / DSM 1257 / FGSC 987), this protein is Sorting nexin mvp1 (vsp-1).